We begin with the raw amino-acid sequence, 395 residues long: ADP-ribosylation factor-like protein 13A (395 aa).

Residues 28–35 (GLDNSGKS), 71–75 (DLTGD), and 130–133 (NKQD) each bind GTP.

The protein belongs to the small GTPase superfamily. Arf family.

The chain is ADP-ribosylation factor-like protein 13A (Arl13a) from Rattus norvegicus (Rat).